Consider the following 134-residue polypeptide: MSRVKRGVAAHAKHKKVLKAAKGFYGRRKNTIRAAKAAVDRSKQFAYRDRKVNKRNFRALWIQRINAAVRESGLTYGRFIDGLNKAGIEVDRKVLSDMAIHEPAAFGALVEASKKALSYLKDTGTKNEFETAVK.

The protein belongs to the bacterial ribosomal protein bL20 family.

Its function is as follows. Binds directly to 23S ribosomal RNA and is necessary for the in vitro assembly process of the 50S ribosomal subunit. It is not involved in the protein synthesizing functions of that subunit. This chain is Large ribosomal subunit protein bL20, found in Allorhizobium ampelinum (strain ATCC BAA-846 / DSM 112012 / S4) (Agrobacterium vitis (strain S4)).